We begin with the raw amino-acid sequence, 135 residues long: MSGLIARAVTEVAQRKAVLEKELPQLVIEILSDLLGAFNPGELLVRAVRHAIERRYNGAEEVCLHVCATQVDMLAREFAGCDGREKRPKVRIETDPTLSPQECVLWSEYGNVALGLDAQMRAALGFEYLSEEGEL.

It belongs to the SctL stator family. In terms of assembly, the core secretion machinery of the T3SS is composed of approximately 20 different proteins, including cytoplasmic components, a base, an export apparatus and a needle. This subunit is part of the cytosolic complex.

It localises to the cytoplasm. Its function is as follows. Component of the type III secretion system (T3SS), also called injectisome, which is used to inject bacterial effector proteins into eukaryotic host cells. Acts as a regulator of the HrcN/SctN ATPase activity. The polypeptide is Type 3 secretion system stator protein (Rhizobium fredii (Sinorhizobium fredii)).